A 431-amino-acid polypeptide reads, in one-letter code: Histidine--tRNA ligase (431 aa).

The protein belongs to the class-II aminoacyl-tRNA synthetase family. As to quaternary structure, homodimer.

It localises to the cytoplasm. It catalyses the reaction tRNA(His) + L-histidine + ATP = L-histidyl-tRNA(His) + AMP + diphosphate + H(+). This chain is Histidine--tRNA ligase, found in Finegoldia magna (strain ATCC 29328 / DSM 20472 / WAL 2508) (Peptostreptococcus magnus).